A 199-amino-acid polypeptide reads, in one-letter code: Probable chemoreceptor glutamine deamidase CheD (199 aa).

Belongs to the CheD family.

The enzyme catalyses L-glutaminyl-[protein] + H2O = L-glutamyl-[protein] + NH4(+). Its function is as follows. Probably deamidates glutamine residues to glutamate on methyl-accepting chemotaxis receptors (MCPs), playing an important role in chemotaxis. In Cereibacter sphaeroides (strain ATCC 17029 / ATH 2.4.9) (Rhodobacter sphaeroides), this protein is Probable chemoreceptor glutamine deamidase CheD.